The following is a 157-amino-acid chain: Small ribosomal subunit protein uS7 (157 aa).

It belongs to the universal ribosomal protein uS7 family. As to quaternary structure, part of the 30S ribosomal subunit. Contacts proteins S9 and S11.

Its function is as follows. One of the primary rRNA binding proteins, it binds directly to 16S rRNA where it nucleates assembly of the head domain of the 30S subunit. Is located at the subunit interface close to the decoding center, probably blocks exit of the E-site tRNA. The polypeptide is Small ribosomal subunit protein uS7 (Borrelia duttonii (strain Ly)).